The chain runs to 156 residues: Small ribosomal subunit protein uS7 (156 aa).

This sequence belongs to the universal ribosomal protein uS7 family. Part of the 30S ribosomal subunit. Contacts proteins S9 and S11.

Its function is as follows. One of the primary rRNA binding proteins, it binds directly to 16S rRNA where it nucleates assembly of the head domain of the 30S subunit. Is located at the subunit interface close to the decoding center, probably blocks exit of the E-site tRNA. The protein is Small ribosomal subunit protein uS7 of Nitrosomonas eutropha (strain DSM 101675 / C91 / Nm57).